A 175-amino-acid chain; its full sequence is uncharacterized protein (175 aa).

Over residues 1–17 (MKVEGGESMHESEEGRD) the composition is skewed to basic and acidic residues. The disordered stretch occupies residues 1-21 (MKVEGGESMHESEEGRDVPNG).

This is an uncharacterized protein from Bacillus thuringiensis subsp. kurstaki.